The chain runs to 214 residues: GTP cyclohydrolase 1 (214 aa).

Residues cysteine 101, histidine 104, and cysteine 172 each contribute to the Zn(2+) site.

It belongs to the GTP cyclohydrolase I family. Toroid-shaped homodecamer, composed of two pentamers of five dimers.

The enzyme catalyses GTP + H2O = 7,8-dihydroneopterin 3'-triphosphate + formate + H(+). It functions in the pathway cofactor biosynthesis; 7,8-dihydroneopterin triphosphate biosynthesis; 7,8-dihydroneopterin triphosphate from GTP: step 1/1. The sequence is that of GTP cyclohydrolase 1 from Gloeobacter violaceus (strain ATCC 29082 / PCC 7421).